The chain runs to 246 residues: 1-(5-phosphoribosyl)-5-[(5-phosphoribosylamino)methylideneamino] imidazole-4-carboxamide isomerase (246 aa).

The active-site Proton acceptor is D8. Residue D131 is the Proton donor of the active site.

It belongs to the HisA/HisF family.

It is found in the cytoplasm. The enzyme catalyses 1-(5-phospho-beta-D-ribosyl)-5-[(5-phospho-beta-D-ribosylamino)methylideneamino]imidazole-4-carboxamide = 5-[(5-phospho-1-deoxy-D-ribulos-1-ylimino)methylamino]-1-(5-phospho-beta-D-ribosyl)imidazole-4-carboxamide. It functions in the pathway amino-acid biosynthesis; L-histidine biosynthesis; L-histidine from 5-phospho-alpha-D-ribose 1-diphosphate: step 4/9. This is 1-(5-phosphoribosyl)-5-[(5-phosphoribosylamino)methylideneamino] imidazole-4-carboxamide isomerase from Albidiferax ferrireducens (strain ATCC BAA-621 / DSM 15236 / T118) (Rhodoferax ferrireducens).